A 150-amino-acid chain; its full sequence is Depactin (150 aa).

One can recognise an ADF-H domain in the interval 3 to 148 (SGTALDENVK…SEEAIGDKIK (146 aa)).

It belongs to the actin-binding proteins ADF family.

Depactin interacts with actin at some of its 12 N-terminal residues and 20 C-terminal residues. Binds to actin monomers from filaments and in solution. In Asterias amurensis (Northern Pacific seastar), this protein is Depactin.